Consider the following 488-residue polypeptide: Katanin p60 ATPase-containing subunit A-like 1 (488 aa).

An N-acetylmethionine modification is found at M1. A disordered region spans residues D95–F179. Basic and acidic residues predominate over residues P116–V127. A compositionally biased stretch (low complexity) spans G128–A138. Basic and acidic residues predominate over residues S142–V167. S172 is subject to Phosphoserine. G246–T253 serves as a coordination point for ATP.

It belongs to the AAA ATPase family. Katanin p60 subunit A1 subfamily. A-like 1 sub-subfamily. In terms of assembly, interacts with KATNB1 and KATNBL1. As to expression, widely expressed, including in testis, brain, heart, lung, kidney, liver, spleen, seminal vesicles and ovary. In testis, restricted to Sertoli cells within the seminiferous epithelium (at protein level).

The protein resides in the cytoplasm. The protein localises to the cytoskeleton. It localises to the spindle pole. It is found in the spindle. The enzyme catalyses n ATP + n H2O + a microtubule = n ADP + n phosphate + (n+1) alpha/beta tubulin heterodimers.. Regulates microtubule dynamics in Sertoli cells, a process that is essential for spermiogenesis and male fertility. Severs microtubules in an ATP-dependent manner, promoting rapid reorganization of cellular microtubule arrays. Has microtubule-severing activity in vitro. This is Katanin p60 ATPase-containing subunit A-like 1 (Katnal1) from Mus musculus (Mouse).